The sequence spans 526 residues: Lysine--tRNA ligase (526 aa).

Mg(2+) contacts are provided by Glu431 and Glu438.

It belongs to the class-II aminoacyl-tRNA synthetase family. In terms of assembly, homodimer. Mg(2+) is required as a cofactor.

The protein resides in the cytoplasm. The catalysed reaction is tRNA(Lys) + L-lysine + ATP = L-lysyl-tRNA(Lys) + AMP + diphosphate. This is Lysine--tRNA ligase from Chlamydia trachomatis serovar L2b (strain UCH-1/proctitis).